The following is a 148-amino-acid chain: Protein-export protein SecB (148 aa).

It belongs to the SecB family. In terms of assembly, homotetramer, a dimer of dimers. One homotetramer interacts with 1 SecA dimer.

It is found in the cytoplasm. In terms of biological role, one of the proteins required for the normal export of preproteins out of the cell cytoplasm. It is a molecular chaperone that binds to a subset of precursor proteins, maintaining them in a translocation-competent state. It also specifically binds to its receptor SecA. The chain is Protein-export protein SecB from Psychrobacter arcticus (strain DSM 17307 / VKM B-2377 / 273-4).